The primary structure comprises 212 residues: Cytidylate kinase (212 aa).

Residue 7 to 15 participates in ATP binding; that stretch reads GPAASGKGT.

It belongs to the cytidylate kinase family. Type 1 subfamily.

Its subcellular location is the cytoplasm. It carries out the reaction CMP + ATP = CDP + ADP. The catalysed reaction is dCMP + ATP = dCDP + ADP. The chain is Cytidylate kinase from Nitrobacter winogradskyi (strain ATCC 25391 / DSM 10237 / CIP 104748 / NCIMB 11846 / Nb-255).